A 143-amino-acid chain; its full sequence is MYENKMNLEFVSKSQNEAFARVAVAAFIAQLDPTIDEISDVKTAVSEAVTNSIIHGYENKEDGVIKIEVEICDGEVTIEITDNGKGIEDIPKVMEPLYTSRPDLERSGMGFTVMETFMDGLLVESEKEKGTRVRMKKKFNILS.

Belongs to the anti-sigma-factor family.

The catalysed reaction is L-seryl-[protein] + ATP = O-phospho-L-seryl-[protein] + ADP + H(+). The enzyme catalyses L-threonyl-[protein] + ATP = O-phospho-L-threonyl-[protein] + ADP + H(+). Its function is as follows. Binds to sigma F and blocks its ability to form an RNA polymerase holoenzyme (E-sigma F). Phosphorylates SpoIIAA on a serine residue. This phosphorylation may enable SpoIIAA to act as an anti-anti-sigma factor that counteracts SpoIIAB and thus releases sigma F from inhibition. The protein is Anti-sigma F factor of Clostridium botulinum (strain Eklund 17B / Type B).